The following is a 1036-amino-acid chain: Ubiquitin carboxyl-terminal hydrolase 48 (1036 aa).

A USP domain is found at 89–421; sequence VGLTNLGASC…NAYMLVYRLQ (333 aa). Cys98 acts as the Nucleophile in catalysis. His353 acts as the Proton acceptor in catalysis. 3 consecutive DUSP domains span residues 460 to 554, 569 to 692, and 712 to 825; these read QSVD…KALC, NQLN…YKEC, and MIAK…RIEV. The disordered stretch occupies residues 611 to 644; it reads DEQDGEAEQSNGKINGSPFSKDESKEEKKEEEEE. Over residues 618-628 the composition is skewed to polar residues; the sequence is EQSNGKINGSP. Residues 881–924 form a disordered region; sequence APELNVSSSETEEDKEEAKPDGEKDPDFNQSNGGTKRQKTSQQG. A phosphoserine mark is found at Ser887, Ser888, and Ser889. Positions 896-907 are enriched in basic and acidic residues; it reads EEAKPDGEKDPD. The span at 908 to 924 shows a compositional bias: polar residues; sequence FNQSNGGTKRQKTSQQG. The Ubiquitin-like domain occupies 930 to 1010; it reads KQVIRRSTRH…ILLKADEPIA (81 aa). Lys957 is subject to N6-acetyllysine.

Belongs to the peptidase C19 family. In terms of assembly, interacts with TRAF2 and RELA. Interacts with GPS1. As to expression, present in the brain, in particular in the postsynaptic density and the dendritic lipid raft fractions (at protein level).

The protein resides in the cytoplasm. It is found in the nucleus. It localises to the cell projection. The protein localises to the cilium. It carries out the reaction Thiol-dependent hydrolysis of ester, thioester, amide, peptide and isopeptide bonds formed by the C-terminal Gly of ubiquitin (a 76-residue protein attached to proteins as an intracellular targeting signal).. Functionally, deubiquitinase that recognizes and hydrolyzes the peptide bond at the C-terminal Gly of ubiquitin. Involved in the processing of polyubiquitin precursors as well as that of ubiquitinated proteins. Plays a role in the regulation of NF-kappa-B activation by TNF receptor superfamily via its interactions with RELA and TRAF2. May also play a regulatory role at postsynaptic sites. Plays an important role in cell cycle progression by deubiquitinating Aurora B/AURKB and thereby extending its stability. In the context of H. pylori infection, stabilizes nuclear RELA through deubiquitination, thereby promoting the transcriptional activity of RELA to prolong TNFAIP3 de novo synthesis. Consequently, TNFAIP3 suppresses caspase activity and apoptotic cell death. Also functions in the modulation of the ciliary and synaptic transport as well as cytoskeleton organization, which are key for photoreceptor function and homeostasis. To achieve this, stabilizes the levels of the retinal degeneration-associated proteins ARL3 and UNC119 using distinct mechanisms. Plays a positive role in pyroptosis by stabilizing gasdermin E/GSDME through removal of its 'Lys-48'-linked ubiquitination. This chain is Ubiquitin carboxyl-terminal hydrolase 48 (Usp48), found in Rattus norvegicus (Rat).